The sequence spans 372 residues: Silphinene synthase peniA (372 aa).

Mg(2+) contacts are provided by D116, E121, N263, S267, and E271. The DDXXE motif motif lies at D116 to E121.

It belongs to the terpene synthase family. Mg(2+) is required as a cofactor.

The enzyme catalyses (2E,6E)-farnesyl diphosphate = silphinene + diphosphate. The protein operates within secondary metabolite biosynthesis; terpenoid biosynthesis. In terms of biological role, sesquiterpene cyclase; part of the gene cluster that mediates the biosynthesis of penifulvin A, a potent insecticidal sesquiterpene that features a [5.5.5.6]dioxafenestrane ring. Within the pathway, peniA catalyzes the first step and generates the angular triquinane scaffold silphinene via cyclization of the linear farnesyl pyrophosphate (FPP). The cytochrome P450 monooxygenase peniB and the flavin-dependent monooxygenase peniC then catalyze a series of oxidation reactions to transform silphinene into penifulvin A. The chain is Silphinene synthase peniA from Penicillium patulum (Penicillium griseofulvum).